The chain runs to 420 residues: Tyrosine--tRNA ligase (420 aa).

Y36 is a binding site for L-tyrosine. The 'HIGH' region signature appears at 41–50; sequence PTADSMHIGH. Residues Y170 and Q174 each coordinate L-tyrosine. The 'KMSKS' region signature appears at 231 to 235; it reads KFGKS. K234 is an ATP binding site. Residues 353-420 form the S4 RNA-binding domain; the sequence is TNIVDFIVEA…KKKYFMVKYK (68 aa).

Belongs to the class-I aminoacyl-tRNA synthetase family. TyrS type 1 subfamily. In terms of assembly, homodimer.

Its subcellular location is the cytoplasm. The enzyme catalyses tRNA(Tyr) + L-tyrosine + ATP = L-tyrosyl-tRNA(Tyr) + AMP + diphosphate + H(+). Its function is as follows. Catalyzes the attachment of tyrosine to tRNA(Tyr) in a two-step reaction: tyrosine is first activated by ATP to form Tyr-AMP and then transferred to the acceptor end of tRNA(Tyr). This Staphylococcus carnosus (strain TM300) protein is Tyrosine--tRNA ligase.